A 913-amino-acid polypeptide reads, in one-letter code: Protein SEY1 homolog (913 aa).

Topologically, residues 1 to 825 (MTDVNKTQII…ETGGHMSLKN (825 aa)) are cytoplasmic. In terms of domain architecture, GB1/RHD3-type G spans 33–288 (GFNYNVIAIL…IPADGFAQYC (256 aa)). A GTP-binding site is contributed by 43-50 (GSQSSGKS). The chain crosses the membrane as a helical span at residues 826–846 (VPFAFWVILLILGWNEILMFT). The Lumenal segment spans residues 847-849 (RLF). A helical transmembrane segment spans residues 850 to 870 (FRLNIILPMLIGFIIIVISCL). The Cytoplasmic segment spans residues 871 to 913 (YTGNAQILSYINKIIFIVIKNLYNFYKHLQTIGHQTTKPEKVE).

Belongs to the TRAFAC class dynamin-like GTPase superfamily. GB1/RHD3 GTPase family. RHD3 subfamily.

It localises to the endoplasmic reticulum membrane. In terms of biological role, probable GTP-binding protein involved in generating and maintaining the structure of the tubular endoplasmic reticulum network. The sequence is that of Protein SEY1 homolog from Plasmodium berghei (strain Anka).